A 433-amino-acid polypeptide reads, in one-letter code: uncharacterized protein (433 aa).

Its subcellular location is the virion. This is an uncharacterized protein from Acanthamoeba polyphaga (Amoeba).